Consider the following 374-residue polypeptide: Alanine racemase (374 aa).

The active-site Proton acceptor; specific for D-alanine is the Lys-34. Position 34 is an N6-(pyridoxal phosphate)lysine (Lys-34). Arg-138 serves as a coordination point for substrate. Catalysis depends on Tyr-265, which acts as the Proton acceptor; specific for L-alanine. Substrate is bound at residue Met-313.

Belongs to the alanine racemase family. The cofactor is pyridoxal 5'-phosphate.

The enzyme catalyses L-alanine = D-alanine. It functions in the pathway amino-acid biosynthesis; D-alanine biosynthesis; D-alanine from L-alanine: step 1/1. In terms of biological role, catalyzes the interconversion of L-alanine and D-alanine. May also act on other amino acids. The chain is Alanine racemase (alr) from Hahella chejuensis (strain KCTC 2396).